We begin with the raw amino-acid sequence, 343 residues long: Methionine import ATP-binding protein MetN 1 (343 aa).

Positions 2–241 constitute an ABC transporter domain; it reads IKLTHISKVF…PKTPLAQQFI (240 aa). Residue 38–45 coordinates ATP; sequence GASGAGKS.

Belongs to the ABC transporter superfamily. Methionine importer (TC 3.A.1.24) family. The complex is composed of two ATP-binding proteins (MetN), two transmembrane proteins (MetI) and a solute-binding protein (MetQ).

Its subcellular location is the cell inner membrane. The enzyme catalyses L-methionine(out) + ATP + H2O = L-methionine(in) + ADP + phosphate + H(+). The catalysed reaction is D-methionine(out) + ATP + H2O = D-methionine(in) + ADP + phosphate + H(+). Functionally, part of the ABC transporter complex MetNIQ involved in methionine import. Responsible for energy coupling to the transport system. The sequence is that of Methionine import ATP-binding protein MetN 1 from Yersinia pestis bv. Antiqua (strain Antiqua).